Here is a 139-residue protein sequence, read N- to C-terminus: Peptide methionine sulfoxide reductase MsrB (139 aa).

Residues 14–137 (DEEWRRELTP…NSISLDFQPE (124 aa)) form the MsrB domain. The Zn(2+) site is built by Cys-53, Cys-56, Cys-102, and Cys-105. Cys-126 acts as the Nucleophile in catalysis.

Belongs to the MsrB Met sulfoxide reductase family. Requires Zn(2+) as cofactor.

It catalyses the reaction L-methionyl-[protein] + [thioredoxin]-disulfide + H2O = L-methionyl-(R)-S-oxide-[protein] + [thioredoxin]-dithiol. This is Peptide methionine sulfoxide reductase MsrB from Leifsonia xyli subsp. xyli (strain CTCB07).